Here is a 335-residue protein sequence, read N- to C-terminus: Acetyl-coenzyme A carboxylase carboxyl transferase subunit alpha (335 aa).

Residues 40–294 enclose the CoA carboxyltransferase C-terminal domain; sequence QLETLAARRR…KEAIEKHLNA (255 aa).

The protein belongs to the AccA family. Acetyl-CoA carboxylase is a heterohexamer composed of biotin carboxyl carrier protein (AccB), biotin carboxylase (AccC) and two subunits each of ACCase subunit alpha (AccA) and ACCase subunit beta (AccD).

It is found in the cytoplasm. The enzyme catalyses N(6)-carboxybiotinyl-L-lysyl-[protein] + acetyl-CoA = N(6)-biotinyl-L-lysyl-[protein] + malonyl-CoA. The protein operates within lipid metabolism; malonyl-CoA biosynthesis; malonyl-CoA from acetyl-CoA: step 1/1. In terms of biological role, component of the acetyl coenzyme A carboxylase (ACC) complex. First, biotin carboxylase catalyzes the carboxylation of biotin on its carrier protein (BCCP) and then the CO(2) group is transferred by the carboxyltransferase to acetyl-CoA to form malonyl-CoA. This is Acetyl-coenzyme A carboxylase carboxyl transferase subunit alpha from Prochlorococcus marinus (strain AS9601).